A 207-amino-acid chain; its full sequence is D-aminoacyl-tRNA deacylase 1 (207 aa).

The Gly-cisPro motif, important for rejection of L-amino acids signature appears at 139 to 140 (GP). Positions 142–207 (TIQLESPPAP…EGDVSSEREP (66 aa)) are disordered. Composition is skewed to basic and acidic residues over residues 156-167 (LLSKQEKQQQRK) and 178-189 (SSREKAAQRSKV).

Belongs to the DTD family. Homodimer.

It is found in the cytoplasm. The enzyme catalyses a D-aminoacyl-tRNA + H2O = a tRNA + a D-alpha-amino acid + H(+). It carries out the reaction glycyl-tRNA(Ala) + H2O = tRNA(Ala) + glycine + H(+). Its function is as follows. D-aminoacyl-tRNA deacylase, with no observable activity on tRNAs charged with their cognate L-amino acid. Hydrolyzes correctly charged, achiral, glycyl-tRNA(Gly). Deacylates mischarged D.melanogaster and E.coli glycyl-tRNA(Ala), protecting cells against glycine mischarging by AlaRS. Acts via tRNA-based rather than protein-based catalysis; rejects L-amino acids rather than detecting D-amino acids in the active site. By recycling D-aminoacyl-tRNA to D-amino acids and free tRNA molecules, this enzyme counteracts the toxicity associated with the formation of D-aminoacyl-tRNA entities in vivo and helps enforce protein L-homochirality. The polypeptide is D-aminoacyl-tRNA deacylase 1 (Danio rerio (Zebrafish)).